The primary structure comprises 551 residues: MVASWLLSTLTFALVLLIKETSTWTYHFSAENMTYDEASAYCQQNYTHLVAIQNKEEIDYLNSILDYSPSYYWIGIRKVNNVWIWVGTHKPLTEGAKNWAPGEPNNKQNNEDCVEIYIKRPKDTGMWNDERCSKKKLALCYTAACTEASCSGHGECIETINNYSCKCYPGFSGLKCEQVVTCEAQVQPQHGSLNCTHPLGNFSYNSSCSVSCERGYLPSSTETTWCTSSGEWSAPPATCKVVECDTMGKPANGDVKCSPSQGSAPWNTTCTFDCEEGFTLLGARSLQCTSSGSWDNEKPTCKAVSCDTIHHPQNGSVSCSNSSEGKFTFRSSCNFTCEENFLLRGPAQVECTAQGQWTQQAPVCEAVKCDPVHTLEDGFVKCTHPHTGEFTYKSSCTFNCREGFELHGSAQLECTSQGQWAQELPSCQVVQCPSLAVLGKTNVSCSGEPVFGTVCNFACPEGWTLNGSAALMCGAEGQWSGMLPTCEEPIASNVPLAVGLSVSGTSFLTLTSFLLWFLKYFRKKAKKFVPASSRYVGLEAHGNCQVPSHLI.

Positions methionine 1–threonine 23 are cleaved as a signal peptide. Residues tryptophan 24 to tyrosine 141 form the C-type lectin domain. Residues tryptophan 24 to proline 495 lie on the Extracellular side of the membrane. N-linked (GlcNAc...) asparagine glycosylation is found at asparagine 32 and asparagine 45. Intrachain disulfides connect cysteine 42–cysteine 140, cysteine 113–cysteine 132, cysteine 145–cysteine 156, cysteine 150–cysteine 165, cysteine 167–cysteine 176, cysteine 182–cysteine 226, cysteine 195–cysteine 208, cysteine 212–cysteine 239, cysteine 244–cysteine 288, cysteine 257–cysteine 270, cysteine 274–cysteine 301, cysteine 306–cysteine 351, cysteine 337–cysteine 364, cysteine 369–cysteine 414, cysteine 400–cysteine 427, cysteine 432–cysteine 473, and cysteine 459–cysteine 486. Positions 103, 105, and 111 each coordinate Ca(2+). Residues glutamate 103–glutamate 111, glutamate 115–arginine 120, and asparagine 128–glutamate 130 contribute to the a carbohydrate site. 2 residues coordinate Ca(2+): asparagine 128 and aspartate 129. One can recognise an EGF-like domain in the interval threonine 142 to glutamate 177. An N-linked (GlcNAc...) asparagine glycan is attached at asparagine 162. 5 Sushi domains span residues valine 180–valine 241, valine 242–alanine 303, serine 305–alanine 366, lysine 368–valine 429, and valine 430–glutamate 488. 3 N-linked (GlcNAc...) asparagine glycosylation sites follow: asparagine 194, asparagine 201, and asparagine 205. Asparagine 267 carries N-linked (GlcNAc...) asparagine glycosylation. N-linked (GlcNAc...) asparagine glycosylation is found at asparagine 314, asparagine 321, and asparagine 334. N-linked (GlcNAc...) asparagine glycosylation is found at asparagine 442 and asparagine 466. Residues leucine 496–phenylalanine 517 traverse the membrane as a helical segment. Over leucine 518–isoleucine 551 the chain is Cytoplasmic.

This sequence belongs to the selectin/LECAM family. In terms of assembly, interacts with SELPLG/PSGL1 and PODXL2 through the sialyl Lewis X epitope. SELPLG sulfation appears not to be required for this interaction.

Its subcellular location is the cell membrane. Its function is as follows. Cell-surface glycoprotein having a role in immunoadhesion. Mediates in the adhesion of blood neutrophils in cytokine-activated endothelium through interaction with SELPLG/PSGL1. May have a role in capillary morphogenesis. The chain is E-selectin (SELE) from Oryctolagus cuniculus (Rabbit).